Consider the following 498-residue polypeptide: DELTA-thalatoxin-Avl2a (498 aa).

A signal peptide spans 1–22 (MSPYFKLSSALIFLAITMEALC). A propeptide spanning residues 23 to 35 (SPIENTSTSNKDN) is cleaved from the precursor. The region spanning 23 to 359 (SPIENTSTSN…GFLHFGCSFL (337 aa)) is the MACPF domain. A coiled-coil region spans residues 135–159 (AAVTNNIASSEEEVQGLSLNLKAYS). 3 disulfides stabilise this stretch: C389-C402, C396-C410, and C412-C422. Positions 410-422 (CECGGPYDLARTC) constitute an EGF-like domain.

The protein localises to the secreted. It is found in the nematocyst. Its function is as follows. Is lethal to mice, and may cause hemolytic activity. In Actineria villosa (Okinawan sea anemone), this protein is DELTA-thalatoxin-Avl2a.